The primary structure comprises 368 residues: Peptidoglycan-recognition protein LA (368 aa).

Over 1–127 (MFEENNSPTT…KSPSRRVTRN (127 aa)) the chain is Cytoplasmic. Disordered stretches follow at residues 21–46 (QRASPAQRLHNLTSAGSSTSSSGLPL) and 101–122 (INSNNANGNGNANRSRDKSPSR). Composition is skewed to low complexity over residues 33 to 43 (TSAGSSTSSSG) and 102 to 113 (NSNNANGNGNAN). The helical transmembrane segment at 128–148 (TILLITLILLVLATGLIVLYV) threads the bilayer. The Extracellular segment spans residues 149–368 (ELNRPKPELP…MKTESWDAKQ (220 aa)). A disulfide bond links C221 and C227. An N-acetylmuramoyl-L-alanine amidase domain is found at 233–320 (TIQDSAIAEK…DVDYKLVAQN (88 aa)). N273 and N320 each carry an N-linked (GlcNAc...) asparagine glycan.

Belongs to the N-acetylmuramoyl-L-alanine amidase 2 family. As to expression, expressed in uninduced hemocytes and mbn-2 cells.

The protein resides in the cell membrane. Peptidoglycan-recognition protein probably involved in innate immunity by binding to peptidoglycans (PGN) of bacteria and activating the immune response. The sequence is that of Peptidoglycan-recognition protein LA (PGRP-LA) from Drosophila melanogaster (Fruit fly).